Reading from the N-terminus, the 230-residue chain is Phosphatidylserine decarboxylase proenzyme (230 aa).

S186 functions as the Schiff-base intermediate with substrate; via pyruvic acid in the catalytic mechanism. S186 is subject to Pyruvic acid (Ser); by autocatalysis.

Belongs to the phosphatidylserine decarboxylase family. PSD-A subfamily. In terms of assembly, heterodimer of a large membrane-associated beta subunit and a small pyruvoyl-containing alpha subunit. Requires pyruvate as cofactor. In terms of processing, is synthesized initially as an inactive proenzyme. Formation of the active enzyme involves a self-maturation process in which the active site pyruvoyl group is generated from an internal serine residue via an autocatalytic post-translational modification. Two non-identical subunits are generated from the proenzyme in this reaction, and the pyruvate is formed at the N-terminus of the alpha chain, which is derived from the carboxyl end of the proenzyme. The post-translation cleavage follows an unusual pathway, termed non-hydrolytic serinolysis, in which the side chain hydroxyl group of the serine supplies its oxygen atom to form the C-terminus of the beta chain, while the remainder of the serine residue undergoes an oxidative deamination to produce ammonia and the pyruvoyl prosthetic group on the alpha chain.

Its subcellular location is the cell membrane. The enzyme catalyses a 1,2-diacyl-sn-glycero-3-phospho-L-serine + H(+) = a 1,2-diacyl-sn-glycero-3-phosphoethanolamine + CO2. It participates in phospholipid metabolism; phosphatidylethanolamine biosynthesis; phosphatidylethanolamine from CDP-diacylglycerol: step 2/2. Functionally, catalyzes the formation of phosphatidylethanolamine (PtdEtn) from phosphatidylserine (PtdSer). This is Phosphatidylserine decarboxylase proenzyme from Wolbachia sp. subsp. Brugia malayi (strain TRS).